A 576-amino-acid polypeptide reads, in one-letter code: MPALSSRSGSEMGLYELLSVLPSQLQPHVESPDDRSFLHAMFGERSLHSLVKIHEKLQCYEDCAPTPVLDSAGSLAADLTEELQARSASNEIRELVKLLSKPHVKSLLSVHDTVAKKSYDPELPPLPDDIDDEEDSVKIIRLVKNKEPLGATIKKDEHTGAILVARILRGGAADRSGLIHVGDELKEVNGIPVDDKKPEEIIRILSQSQGAITFKVVPGIKDEAQSKEPKMFIKALFDYNPAEDKAIPCKEAGLGFKKGDILQVMSQDDATWWQAKLEGDGNLRAGLIPSKHFQERRLAVWRPTPVMTLQRTSSKRFSGLRRSFRLSRRDKKTNKSMYECKKSEQYDTADVPTYEEVTTYRRKHGDRHRLVVLVGPTGVGLNELKRKLLISDTQHFSVTIPHTSRSKRHQESEGVEYHFISKNLFEADIQNNKFIEHGEYKGNYYGTSFDSVRSVLSKNKVCLLDVQPHTLKHLRTAEFKPYVVFVKPPCIERLRETRRNAKVISGKDDKTSSKAFSEEDFLEMISASQMMENQYGHLFEKVIVNDDLTVAFSELKQALKKVETEAHWVPISWTHS.

2 consecutive L27 domains span residues S10–A64 and P65–E122. Positions I139 to I220 constitute a PDZ domain. The SH3 domain maps to E228–L298. A Guanylate kinase-like domain is found at H368–K560.

Belongs to the MAGUK family.

The protein localises to the membrane. It localises to the cell junction. Its subcellular location is the tight junction. The protein resides in the adherens junction. Its function is as follows. Acts as an important adapter that promotes epithelial cell polarity and tight junction formation. Involved in the assembly of protein complexes at sites of cell-cell contact. The chain is MAGUK p55 subfamily member 7 (mpp7) from Danio rerio (Zebrafish).